The chain runs to 510 residues: Outer spore wall protein 7 (510 aa).

The N-terminal stretch at 1-23 (MKAVFKVTTALLACVFIARYLVC) is a signal peptide. Positions 167–195 (FETDSETEDYEDDENENEDEDEDEDEDDV) are disordered. Residues 169–195 (TDSETEDYEDDENENEDEDEDEDEDDV) show a composition bias toward acidic residues. Position 354 is a phosphotyrosine (tyrosine 354).

It belongs to the OSW/SHE family.

In terms of biological role, involved in spore wall assembly. The chain is Outer spore wall protein 7 from Saccharomyces cerevisiae (strain ATCC 204508 / S288c) (Baker's yeast).